The following is a 441-amino-acid chain: Histidine--tRNA ligase (441 aa).

The protein belongs to the class-II aminoacyl-tRNA synthetase family. Homodimer.

Its subcellular location is the cytoplasm. The enzyme catalyses tRNA(His) + L-histidine + ATP = L-histidyl-tRNA(His) + AMP + diphosphate + H(+). The polypeptide is Histidine--tRNA ligase (Koribacter versatilis (strain Ellin345)).